The following is a 1235-amino-acid chain: Structural maintenance of chromosomes protein 1B (1235 aa).

32 to 39 (GPNGSGKS) is a binding site for ATP. The stretch at 156–490 (EEISTSGELI…RSELQNAGID (335 aa)) forms a coiled coil. The SMC hinge domain maps to 514–629 (SVFGRLFDLC…ETMEEARHIA (116 aa)). 2 positions are modified to N6-acetyllysine: K648 and K713. 3 coiled-coil regions span residues 666 to 934 (WDEK…LDCK), 970 to 994 (EKEEAFEIDYSSLKEDLKALQSDQE), and 1022 to 1049 (RALENLKTVRDKFQESTDAFEASRKEAR). K1033 is subject to N6-acetyllysine.

It belongs to the SMC family. SMC1 subfamily. Forms a heterodimer with SMC3. Component of a meiosis-specific cohesin complex, probably composed of the SMC1B and SMC3 heterodimer attached via their SMC hinge domain, RAD21 (or its meiosis-specific related protein REC8), which link them, and STAG3, which interacts with RAD21 or REC8. The cohesin complex interacts with the cohesin loading complex subunits NIPBL/Scc2 (via HEAT repeats) and MAU2/Scc4. NIPBL directly contacts all members of the complex, RAD21, SMC1A/B, SMC3 and STAG1.

It localises to the nucleus. Its subcellular location is the chromosome. It is found in the centromere. Its function is as follows. Meiosis-specific component of cohesin complex. Required for the maintenance of meiotic cohesion, but not, or only to a minor extent, for its establishment. Contributes to axial element (AE) formation and the organization of chromatin loops along the AE. Plays a key role in synapsis, recombination and chromosome movements. The cohesin complex is required for the cohesion of sister chromatids after DNA replication. The cohesin complex apparently forms a large proteinaceous ring within which sister chromatids can be trapped. At anaphase, the complex is cleaved and dissociates from chromatin, allowing sister chromatids to segregate. The meiosis-specific cohesin complex probably replaces mitosis specific cohesin complex when it dissociates from chromatin during prophase I. This Homo sapiens (Human) protein is Structural maintenance of chromosomes protein 1B (SMC1B).